A 347-amino-acid polypeptide reads, in one-letter code: GMP reductase (347 aa).

Residue 108 to 131 coordinates NADP(+); sequence DDFTKTRQILAMSSALRFICVDVA. K(+)-binding residues include G181 and G183. The active-site Thioimidate intermediate is C186. An NADP(+)-binding site is contributed by 216 to 239; sequence IVGDGGCTCPGDVAKAFGGGADFV.

It belongs to the IMPDH/GMPR family. GuaC type 1 subfamily. As to quaternary structure, homotetramer.

It catalyses the reaction IMP + NH4(+) + NADP(+) = GMP + NADPH + 2 H(+). Catalyzes the irreversible NADPH-dependent deamination of GMP to IMP. It functions in the conversion of nucleobase, nucleoside and nucleotide derivatives of G to A nucleotides, and in maintaining the intracellular balance of A and G nucleotides. This Aeromonas hydrophila subsp. hydrophila (strain ATCC 7966 / DSM 30187 / BCRC 13018 / CCUG 14551 / JCM 1027 / KCTC 2358 / NCIMB 9240 / NCTC 8049) protein is GMP reductase.